Reading from the N-terminus, the 195-residue chain is Glycerol-3-phosphate acyltransferase (195 aa).

The next 6 membrane-spanning stretches (helical) occupy residues 4–24 (GLIL…GLLL), 53–73 (GLAA…VLIA), 80–100 (TAVW…WLGF), 110–130 (LGVL…IWLA), 133–153 (FLFR…PIAL), and 154–174 (YFLS…IVFI).

It belongs to the PlsY family. As to quaternary structure, probably interacts with PlsX.

The protein localises to the cell inner membrane. The catalysed reaction is an acyl phosphate + sn-glycerol 3-phosphate = a 1-acyl-sn-glycero-3-phosphate + phosphate. The protein operates within lipid metabolism; phospholipid metabolism. Catalyzes the transfer of an acyl group from acyl-phosphate (acyl-PO(4)) to glycerol-3-phosphate (G3P) to form lysophosphatidic acid (LPA). This enzyme utilizes acyl-phosphate as fatty acyl donor, but not acyl-CoA or acyl-ACP. This is Glycerol-3-phosphate acyltransferase from Mesorhizobium japonicum (strain LMG 29417 / CECT 9101 / MAFF 303099) (Mesorhizobium loti (strain MAFF 303099)).